We begin with the raw amino-acid sequence, 272 residues long: MSGCRVFIGRLNPAAREKDVERFFKGYGRIRDIDLKRGFGFVEFEDPRDADDAVYELDGKELCSERVTIEHARARSRGGRGRGRYSDRFSSRRPRNDRRNAPPVRTENRLIVENLSSRVSWQDLKDFMRQAGEVTFADAHRPKLNEGVVEFASYGDLKNAIEKLSGKEINGRKIKLIEGSKRHSRSRSRSRSRTRSSSRSRSRSRSRSRKSYSRSRSRSRSRSRSKSRSVSRSPVPEKSQKRGSSSRSKSPASVDRQRSRSRSRSRSVDSGN.

In terms of domain architecture, RRM 1 spans 4 to 74 (CRVFIGRLNP…ERVTIEHARA (71 aa)). The disordered stretch occupies residues 73-105 (RARSRGGRGRGRYSDRFSSRRPRNDRRNAPPVR). The span at 74-83 (ARSRGGRGRG) shows a compositional bias: basic residues. Ser-86 carries the post-translational modification Phosphoserine. In terms of domain architecture, RRM 2 spans 108–181 (NRLIVENLSS…RKIKLIEGSK (74 aa)). Lys-167 is modified (N6-acetyllysine). Residues 174 to 272 (IKLIEGSKRH…SRSRSVDSGN (99 aa)) form a disordered region. Positions 182–229 (RHSRSRSRSRSRTRSSSRSRSRSRSRSRKSYSRSRSRSRSRSRSKSRS) are enriched in basic residues. Phosphoserine is present on residues Ser-227, Ser-229, Ser-233, Ser-250, and Ser-253. Residues 242-254 (RGSSSRSKSPASV) show a composition bias toward low complexity.

It belongs to the splicing factor SR family. In terms of assembly, interacts (via RS domain) with PHF5A (via N-terminus). Found in a pre-mRNA splicing complex with SRSF4/SFRS4, SRSF5/SFRS5, SNRNP70, SNRPA1, SRRM1 and SRRM2. Extensively phosphorylated on serine residues in the RS domain.

Its subcellular location is the nucleus. In terms of biological role, plays a role in constitutive splicing and can modulate the selection of alternative splice sites. The chain is Serine/arginine-rich splicing factor 5 (SRSF5) from Homo sapiens (Human).